A 316-amino-acid polypeptide reads, in one-letter code: Ribosomal RNA small subunit methyltransferase H (316 aa).

S-adenosyl-L-methionine is bound by residues 35–37, D55, F84, D105, and Q112; that span reads AGH.

This sequence belongs to the methyltransferase superfamily. RsmH family.

Its subcellular location is the cytoplasm. The enzyme catalyses cytidine(1402) in 16S rRNA + S-adenosyl-L-methionine = N(4)-methylcytidine(1402) in 16S rRNA + S-adenosyl-L-homocysteine + H(+). Its function is as follows. Specifically methylates the N4 position of cytidine in position 1402 (C1402) of 16S rRNA. In Streptococcus pneumoniae serotype 4 (strain ATCC BAA-334 / TIGR4), this protein is Ribosomal RNA small subunit methyltransferase H.